Consider the following 192-residue polypeptide: 7-methyl-GTP pyrophosphatase (192 aa).

Residue Asp69 is the Proton acceptor of the active site.

The protein belongs to the Maf family. YceF subfamily. A divalent metal cation is required as a cofactor.

It localises to the cytoplasm. It catalyses the reaction N(7)-methyl-GTP + H2O = N(7)-methyl-GMP + diphosphate + H(+). In terms of biological role, nucleoside triphosphate pyrophosphatase that hydrolyzes 7-methyl-GTP (m(7)GTP). May have a dual role in cell division arrest and in preventing the incorporation of modified nucleotides into cellular nucleic acids. The polypeptide is 7-methyl-GTP pyrophosphatase (Pseudomonas aeruginosa (strain ATCC 15692 / DSM 22644 / CIP 104116 / JCM 14847 / LMG 12228 / 1C / PRS 101 / PAO1)).